A 417-amino-acid polypeptide reads, in one-letter code: METPTLNKSGSLTIVGTGIESIGQMTLQTLSYIEAADKVFYCVIDPATEAFILTKNKDCVDLYQYYDNGKSRMDTYTQMSEVMLREVRKGLDVVGVFYGHPGVFVNPSLRALAIAKSEGFKARMLPGVSAEDCLYADLCIDPSNPGCLTYEASDFLIRERPTNIYSHFILFQVGCVGIADFNFTGFENSKFGILVDRLEKEYGAEHPVVHYIAAMLPHEDPVTDQWTIGQLREPEFYKRVGGVSTFYIPPKERKEINVDIIRELKFLPEGKVPDTRTQIYPPNQWEPEVPTVPAYGSNEHAAIAQLDTHTPPEQYQPLATSKAMTDVMTKLALDPKALAEYKADHRAFAQSVPDLTANERTALEIGDSWAFRCAMKEMPISLLDNAKQSMEEASEQGFPWIIVVGVVGVVGSVVSSA.

A methyltransferase domain region spans residues Met-1–Lys-251. Residues Arg-72, Tyr-76, and Tyr-98 contribute to the active site. Positions 98, 100, 103, 130, 172, 213, 244, and 245 each coordinate S-adenosyl-L-methionine. A clasp domain region spans residues Glu-252–Met-378. Residues Pro-379–Pro-399 form a precursor leader region. Ile-401 bears the N-methylisoleucine mark. 2 positions are modified to N-methylvaline: Val-403 and Val-404. Gly-405 carries the post-translational modification N-methylglycine. An N-methylvaline mark is found at Val-406 and Val-407. Gly-408 carries the N-methylglycine modification. The residue at position 410 (Val-410) is an N-methylvaline. Gly-411 is subject to N-methylglycine. Val-413 is modified (N-methylvaline).

This sequence in the N-terminal section; belongs to the precorrin methyltransferase family. In terms of assembly, homodimer. LedMA automethylates at Ile-401, Val-403, Val-404, Gly-405, Val-406, Val-407, Gly-408, Val-410, Gly-411 and Val-413 before being processed by the prolyloligopeptidase ledP which likely forms a peptidyl ester upon removal of the follower propeptide, which then undergoes macrocyclization with the N-terminus of the modified core peptide. Peptide backbone alpha-N-methylations change the physicochemical properties of amide bonds to provide structural constraints and other favorable characteristics including biological membrane permeability to peptides.

Its pathway is mycotoxin biosynthesis. Fusion protein of the methyltransferase ledM and the lentinulin A core peptide; part of the gene cluster that mediates the biosynthesis of lentinulin A, a highly methylated cyclic dodecapeptide with nematodicidal activity. Lentinulin A derives from the C-terminus of the ledMA protein, and it is the ledMA protein that methylates its own C-terminus using S-adenosyl methionine (SAM). The C-terminus is subsequently cleaved off and macrocyclized by the prolyloligopeptidase ledP to give the final product. In Lentinula edodes (Shiitake mushroom), this protein is Methyltransferase/ribosomally synthesized cyclic peptide lentinulin A precursor ledMA.